The following is a 585-amino-acid chain: Switch-associated protein 70 (585 aa).

One can recognise a PH domain in the interval D210 to H306. A coiled-coil region spans residues H316–K532.

As to quaternary structure, the SWAP complex consists of NPM1, NCL, PARP1 and SWAP70. Post-translationally, tyrosine-phosphorylated.

Its subcellular location is the cytoplasm. It is found in the cell membrane. The protein localises to the nucleus. The protein resides in the cell projection. It localises to the lamellipodium. Functionally, phosphatidylinositol 3,4,5-trisphosphate-dependent guanine nucleotide exchange factor (GEF) which, independently of RAS, transduces signals from tyrosine kinase receptors to RAC. It also mediates signaling of membrane ruffling. Regulates the actin cytoskeleton as an effector or adapter protein in response to agonist stimulated phosphatidylinositol (3,4)-bisphosphate production and cell protrusion. This is Switch-associated protein 70 (SWAP70) from Bos taurus (Bovine).